The sequence spans 427 residues: Glutamyl-tRNA reductase (427 aa).

Substrate contacts are provided by residues 49-52 (TCNR), Ser101, 106-108 (EPQ), and Gln112. Cys50 acts as the Nucleophile in catalysis. 181–186 (GAGETI) lines the NADP(+) pocket. The disordered stretch occupies residues 407–427 (FPATPGYRHPPVRPDDADPAP). Basic and acidic residues predominate over residues 418–427 (VRPDDADPAP).

The protein belongs to the glutamyl-tRNA reductase family. Homodimer.

It catalyses the reaction (S)-4-amino-5-oxopentanoate + tRNA(Glu) + NADP(+) = L-glutamyl-tRNA(Glu) + NADPH + H(+). It functions in the pathway porphyrin-containing compound metabolism; protoporphyrin-IX biosynthesis; 5-aminolevulinate from L-glutamyl-tRNA(Glu): step 1/2. Its function is as follows. Catalyzes the NADPH-dependent reduction of glutamyl-tRNA(Glu) to glutamate 1-semialdehyde (GSA). The polypeptide is Glutamyl-tRNA reductase (Stenotrophomonas maltophilia (strain R551-3)).